Consider the following 295-residue polypeptide: Glycine N-acyltransferase-like protein Keg1 (295 aa).

Lysine 41 bears the N6-acetyllysine; alternate mark. Lysine 41 is subject to N6-succinyllysine; alternate. Position 43 is an N6-acetyllysine (lysine 43). Lysine 48 is subject to N6-acetyllysine; alternate. Lysine 48 carries the N6-succinyllysine; alternate modification. Lysine 80 and lysine 83 each carry N6-acetyllysine. Residues lysine 124, lysine 128, and lysine 140 each carry the N6-acetyllysine; alternate modification. N6-succinyllysine; alternate occurs at positions 124, 128, and 140. Lysine 150 is subject to N6-acetyllysine. At lysine 255 the chain carries N6-acetyllysine; alternate. At lysine 255 the chain carries N6-succinyllysine; alternate.

This sequence belongs to the glycine N-acyltransferase family. Binds to microtubules.

It localises to the cytoplasm. The protein resides in the cytoskeleton. The protein localises to the microtubule organizing center. It is found in the centrosome. The enzyme catalyses an acyl-CoA + glycine = an N-acylglycine + CoA + H(+). Acyltransferase which transfers the acyl group to the N-terminus of glycine. Can conjugate a multitude of substrates to form a variety of N-acylglycines. The sequence is that of Glycine N-acyltransferase-like protein Keg1 (Keg1) from Mus musculus (Mouse).